A 221-amino-acid chain; its full sequence is UPF0758 protein HI_0952 (221 aa).

In terms of domain architecture, MPN spans 99–221 (IINDPETVKL…CYSFAENCLL (123 aa)). Histidine 170, histidine 172, and aspartate 183 together coordinate Zn(2+). Residues 170 to 183 (HNHPSGITEPSYSD) carry the JAMM motif motif.

It belongs to the UPF0758 family.

In Haemophilus influenzae (strain ATCC 51907 / DSM 11121 / KW20 / Rd), this protein is UPF0758 protein HI_0952.